The primary structure comprises 304 residues: Dihydroorotate dehydrogenase B (NAD(+)), catalytic subunit (304 aa).

Residues Ser-22 and 46 to 47 (KA) each bind FMN. Residues Lys-46 and 70–74 (NAIGL) contribute to the substrate site. Asn-100 and Asn-128 together coordinate FMN. Asn-128 provides a ligand contact to substrate. The Nucleophile role is filled by Cys-131. Residues Lys-166 and Ile-192 each coordinate FMN. Position 193–194 (193–194 (NT)) interacts with substrate. FMN is bound by residues Gly-218, 244–245 (GG), and 266–267 (GT).

The protein belongs to the dihydroorotate dehydrogenase family. Type 1 subfamily. As to quaternary structure, heterotetramer of 2 PyrK and 2 PyrD type B subunits. FMN is required as a cofactor.

It is found in the cytoplasm. It carries out the reaction (S)-dihydroorotate + NAD(+) = orotate + NADH + H(+). It functions in the pathway pyrimidine metabolism; UMP biosynthesis via de novo pathway; orotate from (S)-dihydroorotate (NAD(+) route): step 1/1. Functionally, catalyzes the conversion of dihydroorotate to orotate with NAD(+) as electron acceptor. The protein is Dihydroorotate dehydrogenase B (NAD(+)), catalytic subunit (pyrD) of Fusobacterium nucleatum subsp. nucleatum (strain ATCC 25586 / DSM 15643 / BCRC 10681 / CIP 101130 / JCM 8532 / KCTC 2640 / LMG 13131 / VPI 4355).